A 223-amino-acid chain; its full sequence is 2-C-methyl-D-erythritol 4-phosphate cytidylyltransferase (223 aa).

It belongs to the IspD/TarI cytidylyltransferase family. IspD subfamily.

The catalysed reaction is 2-C-methyl-D-erythritol 4-phosphate + CTP + H(+) = 4-CDP-2-C-methyl-D-erythritol + diphosphate. The protein operates within isoprenoid biosynthesis; isopentenyl diphosphate biosynthesis via DXP pathway; isopentenyl diphosphate from 1-deoxy-D-xylulose 5-phosphate: step 2/6. Functionally, catalyzes the formation of 4-diphosphocytidyl-2-C-methyl-D-erythritol from CTP and 2-C-methyl-D-erythritol 4-phosphate (MEP). This chain is 2-C-methyl-D-erythritol 4-phosphate cytidylyltransferase, found in Prochlorococcus marinus subsp. pastoris (strain CCMP1986 / NIES-2087 / MED4).